The primary structure comprises 412 residues: Serine hydroxymethyltransferase (412 aa).

Residues leucine 117 and 121-123 contribute to the (6S)-5,6,7,8-tetrahydrofolate site; that span reads GHL. Position 226 is an N6-(pyridoxal phosphate)lysine (lysine 226).

The protein belongs to the SHMT family. Homodimer. It depends on pyridoxal 5'-phosphate as a cofactor.

Its subcellular location is the cytoplasm. The enzyme catalyses (6R)-5,10-methylene-5,6,7,8-tetrahydrofolate + glycine + H2O = (6S)-5,6,7,8-tetrahydrofolate + L-serine. The protein operates within one-carbon metabolism; tetrahydrofolate interconversion. It functions in the pathway amino-acid biosynthesis; glycine biosynthesis; glycine from L-serine: step 1/1. In terms of biological role, catalyzes the reversible interconversion of serine and glycine with tetrahydrofolate (THF) serving as the one-carbon carrier. This reaction serves as the major source of one-carbon groups required for the biosynthesis of purines, thymidylate, methionine, and other important biomolecules. Also exhibits THF-independent aldolase activity toward beta-hydroxyamino acids, producing glycine and aldehydes, via a retro-aldol mechanism. The polypeptide is Serine hydroxymethyltransferase (Natranaerobius thermophilus (strain ATCC BAA-1301 / DSM 18059 / JW/NM-WN-LF)).